A 1426-amino-acid chain; its full sequence is Nephrocystin-4 (1426 aa).

Ser142 is modified (phosphoserine). 2 disordered regions span residues 450–536 (GSEE…SPAQ) and 896–935 (RQGK…GRRG). The span at 474–486 (KPPTSPSSPPAPV) shows a compositional bias: pro residues. Residues 503–536 (SISQLAASPRSPTQHCLARPTSQLPHGSQASPAQ) are compositionally biased toward polar residues. The segment at 823–1426 (LTLANVGHPC…EAFCVKVIYQ (604 aa)) is sufficient for basal bodies localization.

The protein belongs to the NPHP4 family. Interacts with NPHP1. Interacts with NPHP1 and RPGRIP1L/NPHP8; NPHP1, NPHP4 and RPGRIP1L are proposed to form a functional NPHP1-4-8 module localized to cell-cell contacts and the ciliary transition zone; NPHP4 mediates the interaction between NPHP1 and RPGRIP1L. Interacts with IQCB1/NPHP5; the interaction likely requires additional interactors. Interacts with RPGRIP1, CEP164, JADE1, PALS1, INADL, PARD6A, INVS, DVL2, LATS1. Interacts with INTU; INTU mediates the interaction between NPHP4 and DAAM1. Interacts with SPATA7. Expressed in kidney, skeletal muscle, heart and liver, and to a lesser extent in brain and lung.

It is found in the cytoplasm. The protein localises to the cytoskeleton. The protein resides in the cilium basal body. Its subcellular location is the microtubule organizing center. It localises to the centrosome. It is found in the cell junction. The protein localises to the tight junction. The protein resides in the nucleus. Involved in the organization of apical junctions; the function is proposed to implicate a NPHP1-4-8 module. Does not seem to be strictly required for ciliogenesis. Required for building functional cilia. Involved in the organization of the subapical actin network in multiciliated epithelial cells. Seems to recruit INT to basal bodies of motile cilia which subsequently interacts with actin-modifying proteins such as DAAM1. In cooperation with INVS may down-regulate the canonical Wnt pathway and promote the Wnt-PCP pathway by regulating expression and subcellular location of disheveled proteins. Stabilizes protein levels of JADE1 and promotes its translocation to the nucleus leading to cooperative inhibition of canonical Wnt signaling. Acts as a negative regulator of the hippo pathway by association with LATS1 and modifying LATS1-dependent phosphorylation and localization of WWTR1/TAZ. This Homo sapiens (Human) protein is Nephrocystin-4 (NPHP4).